A 596-amino-acid polypeptide reads, in one-letter code: Adenine deaminase (596 aa).

This sequence belongs to the metallo-dependent hydrolases superfamily. Adenine deaminase family. It depends on Mn(2+) as a cofactor.

The catalysed reaction is adenine + H2O + H(+) = hypoxanthine + NH4(+). This chain is Adenine deaminase, found in Moorella thermoacetica (strain ATCC 39073 / JCM 9320).